The chain runs to 325 residues: Tetraacyldisaccharide 4'-kinase (325 aa).

53–60 is a binding site for ATP; sequence SVGGNGKT.

Belongs to the LpxK family.

The enzyme catalyses a lipid A disaccharide + ATP = a lipid IVA + ADP + H(+). The protein operates within glycolipid biosynthesis; lipid IV(A) biosynthesis; lipid IV(A) from (3R)-3-hydroxytetradecanoyl-[acyl-carrier-protein] and UDP-N-acetyl-alpha-D-glucosamine: step 6/6. In terms of biological role, transfers the gamma-phosphate of ATP to the 4'-position of a tetraacyldisaccharide 1-phosphate intermediate (termed DS-1-P) to form tetraacyldisaccharide 1,4'-bis-phosphate (lipid IVA). This Mannheimia succiniciproducens (strain KCTC 0769BP / MBEL55E) protein is Tetraacyldisaccharide 4'-kinase.